Reading from the N-terminus, the 808-residue chain is Protein Ac66 (808 aa).

Residues 132-141 (PFSTPPPTQP) show a composition bias toward pro residues. Residues 132–151 (PFSTPPPTQPPESNVAGVGG) are disordered.

Interacts with the putative E3 ligase IE0 and with viral ubiquitin/vUbi.

The protein resides in the host nucleus. It localises to the host cytoplasm. In terms of biological role, plays an essential role in the efficient egress of nucleocapsids from the host nucleus to the cytoplasm. The protein is Protein Ac66 (Ac66) of Lepidoptera (butterflies and moths).